The following is a 373-amino-acid chain: Potential protein lysine methyltransferase SET6 (373 aa).

Residues 12–338 enclose the SET domain; it reads PFFQVRQTKW…KDEQICIDYS (327 aa).

This sequence belongs to the class V-like SAM-binding methyltransferase superfamily.

In terms of biological role, involved in resistance to compounds that target ergosterol biosynthesis, including fenpropimorph, dyclonine, and alverine citrate. Since a deletion in the absence of these compounds does not have an effect on growth, is more likely to be involved in compound availability. This Saccharomyces cerevisiae (strain ATCC 204508 / S288c) (Baker's yeast) protein is Potential protein lysine methyltransferase SET6 (SET6).